We begin with the raw amino-acid sequence, 338 residues long: Ornithine carbamoyltransferase (338 aa).

Residues 56–59, Gln-83, Arg-107, and 134–137 each bind carbamoyl phosphate; these read STRT and HPTQ. L-ornithine-binding positions include Asn-168, Asp-232, and 236–237; that span reads SM. Carbamoyl phosphate-binding positions include 274–275 and Arg-320; that span reads CL.

The protein belongs to the aspartate/ornithine carbamoyltransferase superfamily. OTCase family.

The protein localises to the cytoplasm. It catalyses the reaction carbamoyl phosphate + L-ornithine = L-citrulline + phosphate + H(+). The protein operates within amino-acid biosynthesis; L-arginine biosynthesis; L-arginine from L-ornithine and carbamoyl phosphate: step 1/3. Its function is as follows. Reversibly catalyzes the transfer of the carbamoyl group from carbamoyl phosphate (CP) to the N(epsilon) atom of ornithine (ORN) to produce L-citrulline. This Photorhabdus laumondii subsp. laumondii (strain DSM 15139 / CIP 105565 / TT01) (Photorhabdus luminescens subsp. laumondii) protein is Ornithine carbamoyltransferase.